Here is an 80-residue protein sequence, read N- to C-terminus: Protein FAM229B (80 aa).

The segment at 1–44 (MPFRFGTQPRRFPVEGGDSSIGLEPGLSSSAACNGKEMSPTRQL) is disordered.

Belongs to the FAM229 family.

In Macaca fascicularis (Crab-eating macaque), this protein is Protein FAM229B (FAM229B).